The primary structure comprises 150 residues: Translation machinery-associated protein 17 (150 aa).

2 positions are modified to phosphoserine: serine 24 and serine 68. The disordered stretch occupies residues 110–139 (RKTGHGKSKHEVEAKDNTNKGPDVDMDNSN). The segment covering 118-127 (KHEVEAKDNT) has biased composition (basic and acidic residues).

In terms of assembly, interacts with RPT6. Interacts with the 40S and 60S ribosomal subunits.

Its subcellular location is the cytoplasm. The protein localises to the nucleus. Functionally, ATPase-dedicated chaperone that assists the formation of the RPT6-RPT3 ATPase pair, an early step in proteasome assembly. Plays a key role in maintaining homeostatic proteasome levels and adjusting proteasome assembly when demands increase, such as during proteasome stresses. Function overlaps with RPN14. This Saccharomyces cerevisiae (strain ATCC 204508 / S288c) (Baker's yeast) protein is Translation machinery-associated protein 17 (TMA17).